We begin with the raw amino-acid sequence, 752 residues long: Multifunctional tryptophan biosynthesis protein (752 aa).

Positions 3 to 202 (FTLLIDNYDS…IQMKGGKWGG (200 aa)) constitute a Glutamine amidotransferase type-1 domain. 58–60 (GPG) is an L-glutamine binding site. The active-site Nucleophile; for GATase activity is cysteine 86. An L-glutamine-binding site is contributed by 136–137 (SL). Active-site for GATase activity residues include histidine 176 and glutamate 178. The interval 231–495 (ILNRIHAQRL…DTKAFLRSLI (265 aa)) is indole-3-glycerol phosphate synthase. Residues 509–752 (LVKICGIRST…VEAFVKAVRG (244 aa)) are N-(5'-phosphoribosyl)anthranilate isomerase.

It catalyses the reaction N-(5-phospho-beta-D-ribosyl)anthranilate = 1-(2-carboxyphenylamino)-1-deoxy-D-ribulose 5-phosphate. It carries out the reaction 1-(2-carboxyphenylamino)-1-deoxy-D-ribulose 5-phosphate + H(+) = (1S,2R)-1-C-(indol-3-yl)glycerol 3-phosphate + CO2 + H2O. The enzyme catalyses chorismate + L-glutamine = anthranilate + pyruvate + L-glutamate + H(+). The protein operates within amino-acid biosynthesis; L-tryptophan biosynthesis; L-tryptophan from chorismate: step 1/5. It participates in amino-acid biosynthesis; L-tryptophan biosynthesis; L-tryptophan from chorismate: step 3/5. It functions in the pathway amino-acid biosynthesis; L-tryptophan biosynthesis; L-tryptophan from chorismate: step 4/5. Trifunctional enzyme bearing the Gln amidotransferase (GATase) domain of anthranilate synthase, indole-glycerolphosphate synthase, and phosphoribosylanthranilate isomerase activities. The polypeptide is Multifunctional tryptophan biosynthesis protein (TRP1) (Cryptococcus neoformans var. neoformans serotype D (strain B-3501A) (Filobasidiella neoformans)).